The sequence spans 417 residues: Acetate kinase (417 aa).

Asn9 contributes to the Mg(2+) binding site. An ATP-binding site is contributed by Lys16. A substrate-binding site is contributed by Arg90. The active-site Proton donor/acceptor is Asp147. ATP contacts are provided by residues 207 to 211, 282 to 284, and 330 to 334; these read HIGNG, DLR, and GIGEN. Residue Glu384 coordinates Mg(2+).

Belongs to the acetokinase family. Homodimer. The cofactor is Mg(2+). Mn(2+) is required as a cofactor.

It localises to the cytoplasm. It catalyses the reaction acetate + ATP = acetyl phosphate + ADP. It participates in metabolic intermediate biosynthesis; acetyl-CoA biosynthesis; acetyl-CoA from acetate: step 1/2. Catalyzes the formation of acetyl phosphate from acetate and ATP. Can also catalyze the reverse reaction. The sequence is that of Acetate kinase from Staphylococcus epidermidis (strain ATCC 35984 / DSM 28319 / BCRC 17069 / CCUG 31568 / BM 3577 / RP62A).